Reading from the N-terminus, the 144-residue chain is Transmembrane protein 170A (144 aa).

The Lumenal portion of the chain corresponds to 1–50 (MEREGSGGSGGSAGLLQQILSLKVVPRVGNGTLCPNSTSLCSFPEMWYGV). N-linked (GlcNAc...) asparagine glycosylation is found at N30 and N36. Residues 51–71 (FLWALVSSLFFHVPAGLLALF) form a helical membrane-spanning segment. Over 72-85 (TLRHHKYGRFMSVS) the chain is Cytoplasmic. Residues 86-106 (ILLMGIVGPITAGILTSAAIA) form a helical membrane-spanning segment. The Lumenal portion of the chain corresponds to 107 to 116 (GVYRAAGKEM). Residues 117–137 (IPFEALTLGTGQTFCVLVVSF) traverse the membrane as a helical segment. The Cytoplasmic portion of the chain corresponds to 138–144 (LRILATL).

The protein belongs to the TMEM170 family. In terms of assembly, interacts with RTN4.

It localises to the endoplasmic reticulum membrane. The protein resides in the nucleus envelope. Its function is as follows. Acts as a regulator of endoplasmic reticulum (ER) and nuclear envelope (NE) morphogenesis. Affects the ratio between tubular ER and ER sheets by promoting sheet formation at the expense of tubules. Influences NE expansion, nuclear pore complex formation and proper localization of inner nuclear membrane proteins. This is Transmembrane protein 170A (TMEM170A) from Homo sapiens (Human).